The chain runs to 147 residues: Transthyretin (147 aa).

A signal peptide spans 1–20 (MASHRLLLLCLAGLVFVSEA). Residue C30 is modified to Sulfocysteine. K35 provides a ligand contact to L-thyroxine. E62 carries the post-translational modification 4-carboxyglutamate; in a patient with Moyamoya disease. S72 carries the post-translational modification Phosphoserine. Residue E74 participates in L-thyroxine binding. The N-linked (GlcNAc...) asparagine glycan is linked to N118. S137 serves as a coordination point for L-thyroxine.

It belongs to the transthyretin family. As to quaternary structure, homotetramer. Dimer of dimers. In the homotetramer, subunits assemble around a central channel that can accommodate two ligand molecules. Interacts with RBP4. Not glycosylated under normal conditions. Following unfolding, caused for example by variant AMYLD1 'Gly-38', the cryptic Asn-118 site is exposed and glycosylated by STT3B-containing OST complex, leading to its degradation by the ER-associated degradation (ERAD) pathway. In terms of processing, sulfonation of the reactive cysteine Cys-30 enhances the stability of the native conformation of TTR, avoiding misassembly of the protein leading to amyloid formation. In terms of tissue distribution, detected in serum and cerebrospinal fluid (at protein level). Highly expressed in choroid plexus epithelial cells. Detected in retina pigment epithelium and liver.

It localises to the secreted. It is found in the cytoplasm. Thyroid hormone-binding protein. Probably transports thyroxine from the bloodstream to the brain. The protein is Transthyretin (TTR) of Homo sapiens (Human).